A 243-amino-acid polypeptide reads, in one-letter code: 3-deoxy-manno-octulosonate cytidylyltransferase (243 aa).

Belongs to the KdsB family.

The protein resides in the cytoplasm. The catalysed reaction is 3-deoxy-alpha-D-manno-oct-2-ulosonate + CTP = CMP-3-deoxy-beta-D-manno-octulosonate + diphosphate. Its pathway is nucleotide-sugar biosynthesis; CMP-3-deoxy-D-manno-octulosonate biosynthesis; CMP-3-deoxy-D-manno-octulosonate from 3-deoxy-D-manno-octulosonate and CTP: step 1/1. It functions in the pathway bacterial outer membrane biogenesis; lipopolysaccharide biosynthesis. Functionally, activates KDO (a required 8-carbon sugar) for incorporation into bacterial lipopolysaccharide in Gram-negative bacteria. This chain is 3-deoxy-manno-octulosonate cytidylyltransferase, found in Bartonella bacilliformis (strain ATCC 35685 / KC583 / Herrer 020/F12,63).